The sequence spans 140 residues: 3-hydroxyacyl-[acyl-carrier-protein] dehydratase FabZ (140 aa).

The active site involves H48.

It belongs to the thioester dehydratase family. FabZ subfamily.

The protein resides in the cytoplasm. The enzyme catalyses a (3R)-hydroxyacyl-[ACP] = a (2E)-enoyl-[ACP] + H2O. Its function is as follows. Involved in unsaturated fatty acids biosynthesis. Catalyzes the dehydration of short chain beta-hydroxyacyl-ACPs and long chain saturated and unsaturated beta-hydroxyacyl-ACPs. The chain is 3-hydroxyacyl-[acyl-carrier-protein] dehydratase FabZ from Oceanobacillus iheyensis (strain DSM 14371 / CIP 107618 / JCM 11309 / KCTC 3954 / HTE831).